The sequence spans 423 residues: UDP-N-acetylglucosamine 1-carboxyvinyltransferase (423 aa).

22–23 serves as a coordination point for phosphoenolpyruvate; the sequence is KN. A UDP-N-acetyl-alpha-D-glucosamine-binding site is contributed by arginine 93. The active-site Proton donor is cysteine 117. Cysteine 117 bears the 2-(S-cysteinyl)pyruvic acid O-phosphothioketal mark. UDP-N-acetyl-alpha-D-glucosamine-binding positions include 122–126, aspartate 308, and valine 330; that span reads RPVDL.

It belongs to the EPSP synthase family. MurA subfamily.

Its subcellular location is the cytoplasm. It carries out the reaction phosphoenolpyruvate + UDP-N-acetyl-alpha-D-glucosamine = UDP-N-acetyl-3-O-(1-carboxyvinyl)-alpha-D-glucosamine + phosphate. It participates in cell wall biogenesis; peptidoglycan biosynthesis. Its function is as follows. Cell wall formation. Adds enolpyruvyl to UDP-N-acetylglucosamine. This Finegoldia magna (strain ATCC 29328 / DSM 20472 / WAL 2508) (Peptostreptococcus magnus) protein is UDP-N-acetylglucosamine 1-carboxyvinyltransferase.